The sequence spans 223 residues: Protein NrfC (223 aa).

A signal peptide (tat-type signal) is located at residues 1–27; the sequence is MTWSRRQFLTGVGVLAAVSGTAGRVVA. 3 4Fe-4S ferredoxin-type domains span residues 37–65, 83–114, and 116–145; these read YGMVHDESLCIGCTACMDACREVNKVPEG, VKYRFFRKSCQHCDHAPCVDVCPTGASFRDAA, and GIVDVNPDLCVGCQYCIAACPYRVRFIHPV. [4Fe-4S] cluster is bound by residues C46, C49, C52, C56, C92, C95, C100, C104, C125, C128, C131, C135, C152, C155, C168, and C172.

Post-translationally, predicted to be exported by the Tat system. The position of the signal peptide cleavage has not been experimentally proven.

In terms of biological role, probably involved in the transfer of electrons from the quinone pool to the type-c cytochromes. This is Protein NrfC (nrfC) from Escherichia coli O157:H7.